The primary structure comprises 831 residues: MSQGWRGGSGGWRGGGGGNPYAGAWRGRPWRGRGQGGTWSRNNGRDPVCFAPPKPQLTQTTLDKYIPYKGWKLYFSEAYSDNSPFLEKVRAFEKFFKKQIELYDKDEIERKGSILVDYKELLQDEDLSAAIPLSSELKDMPEKVLECMGLAIHQVLTKDLETHAADLQQQEGLRTEEAPIVNVPFIHARVFNYDTLTSLKNLRASLYGKYVALRGTVVRVGNIKPLCTKMAFSCNMCGDIQCFPLPDGKYTVPTKCPVPECRGRSFTANRSSPLTVTVDWQTIKVQELMSDDQREAGRIPRTVECELIQDLVDSCVPGDMITVTGIVKVSNTRDGGFKNKNNKCMFLLYIEANSVSNSKGQKGKSTEDSGNHGASMDFSLKDLYAIQEIQSQENLFQLIVNSLCPTIYGHELVKAGLSLALFGGCQKYADDKNRIPIRGDPHILVVGDPGLGKSQMLQAVCNVAPRGVYVCGNTTTTSGLTVTLSRDTTTGDFGLEAGALVLGDQGICGIDEFDKMGNQHQALLEAMEQQSISLAKAGIVCSLPARTSIIAAANPVGGHYNKGKTVSENLKMGSALLSRFDLVFILVDTPNEDHDHLLSEHVMAMRSGAKEIQSVDITRINTQNSNTSILEVPSERPLGERLKRTGEHFDALPHQLLRKFVGYARQYVHPSLSPDAAQILQDFYLELRKQNQGIDSTPITTRQLESLIRLTEARARLELREKATKEDAEEVVQIMKYSLLGTFSDEFGKLDFQRSQHGSGMSNRSKAKKFVSALNRVAEQTYNNLFEFQQLRQIARELQIQVIDFEAFIGSLNDQGYLLKKGPRVFQLQTM.

Residues 1 to 20 (MSQGWRGGSGGWRGGGGGNP) show a composition bias toward gly residues. Residues 1-53 (MSQGWRGGSGGWRGGGGGNPYAGAWRGRPWRGRGQGGTWSRNNGRDPVCFAPP) form a disordered region. In terms of domain architecture, MCM spans 395–602 (LFQLIVNSLC…DHDHLLSEHV (208 aa)). 447-454 (GDPGLGKS) lines the ATP pocket.

This sequence belongs to the MCM family. As to quaternary structure, component of the MCM8-MCM9 complex, which forms a hexamer composed of mcm8 and mcm9.

Its subcellular location is the nucleus. The catalysed reaction is ATP + H2O = ADP + phosphate + H(+). Its function is as follows. Component of the MCM8-MCM9 complex, a complex involved in homologous recombination repair following DNA interstrand cross-links and plays a key role during gametogenesis. The MCM8-MCM9 complex probably acts as a hexameric helicase required to process aberrant forks into homologous recombination substrates and to orchestrate homologous recombination with resection, fork stabilization and fork restart. In eggs, required for elongation during DNA replication by facilitating the recruitment of rpa2/rpa34 and stimulating the processivity of DNA polymerases at replication foci. Probably not required for DNA replication in other cells. The polypeptide is DNA helicase MCM8 (mcm8) (Xenopus laevis (African clawed frog)).